The sequence spans 226 residues: B-cell antigen receptor complex-associated protein alpha chain (226 aa).

The first 32 residues, methionine 1 to alanine 32, serve as a signal peptide directing secretion. In terms of domain architecture, Ig-like C2-type spans leucine 33 to glutamine 116. Over leucine 33 to arginine 143 the chain is Extracellular. An intrachain disulfide couples cysteine 54 to cysteine 106. N-linked (GlcNAc...) asparagine glycans are attached at residues asparagine 57, asparagine 63, asparagine 73, asparagine 88, asparagine 97, and asparagine 112. Residues isoleucine 144 to phenylalanine 165 traverse the membrane as a helical segment. Residues arginine 166–proline 226 lie on the Cytoplasmic side of the membrane. One can recognise an ITAM domain in the interval aspartate 177–glycine 205. Tyrosine 188 and tyrosine 199 each carry phosphotyrosine; by SRC-type Tyr-kinases. At arginine 204 the chain carries Asymmetric dimethylarginine; by PRMT1. Tyrosine 210 carries the post-translational modification Phosphotyrosine; by Tyr-kinases.

In terms of assembly, heterodimer of alpha and beta chains; disulfide-linked. Part of the B-cell antigen receptor complex where the alpha/beta chain heterodimer is non-covalently associated with an antigen-specific membrane-bound surface immunoglobulin of two heavy chains and two light chains. Interacts through its phosphorylated ITAM domain with the SH2 domains of SYK which stimulates SYK autophosphorylation and activation. Also interacts, when phosphorylated on Tyr-210, with the SH2 domain of BLNK/SLP65, bringing BLNK into proximity with SYK and allowing SYK to phosphorylate BLNK which is necessary for trafficking of the BCR to late endosomes. Interacts with Src-family tyrosine kinases including FYN and LYN, increasing their activity. Phosphorylated on tyrosine, serine and threonine residues upon B-cell activation. Phosphorylation of tyrosine residues by Src-family kinases is an early and essential feature of the BCR signaling cascade. The phosphorylated tyrosines serve as docking sites for SH2-domain containing kinases, leading to their activation which in turn leads to phosphorylation of downstream targets. Phosphorylated by LYN. Phosphorylation of serine and threonine residues may prevent subsequent tyrosine phosphorylation. In terms of processing, arginine methylation in the ITAM domain may interfere with the binding of SYK. It promotes signals leading to B-cell differentiation. In terms of tissue distribution, B-cells.

It is found in the cell membrane. In terms of biological role, required in cooperation with CD79B for initiation of the signal transduction cascade activated by binding of antigen to the B-cell antigen receptor complex (BCR) which leads to internalization of the complex, trafficking to late endosomes and antigen presentation. Also required for BCR surface expression and for efficient differentiation of pro- and pre-B-cells. Stimulates SYK autophosphorylation and activation. Binds to BLNK, bringing BLNK into proximity with SYK and allowing SYK to phosphorylate BLNK. Also interacts with and increases activity of some Src-family tyrosine kinases. Represses BCR signaling during development of immature B-cells. In Homo sapiens (Human), this protein is B-cell antigen receptor complex-associated protein alpha chain (CD79A).